The following is a 378-amino-acid chain: Erythronate-4-phosphate dehydrogenase (378 aa).

Ser45 and Thr66 together coordinate substrate. Asp146 and Thr175 together coordinate NAD(+). Residue Arg208 is part of the active site. An NAD(+)-binding site is contributed by Asp232. Glu237 is a catalytic residue. The active-site Proton donor is the His254. Residue Gly257 coordinates NAD(+). Tyr258 is a substrate binding site.

This sequence belongs to the D-isomer specific 2-hydroxyacid dehydrogenase family. PdxB subfamily. As to quaternary structure, homodimer.

Its subcellular location is the cytoplasm. The enzyme catalyses 4-phospho-D-erythronate + NAD(+) = (R)-3-hydroxy-2-oxo-4-phosphooxybutanoate + NADH + H(+). It functions in the pathway cofactor biosynthesis; pyridoxine 5'-phosphate biosynthesis; pyridoxine 5'-phosphate from D-erythrose 4-phosphate: step 2/5. Its function is as follows. Catalyzes the oxidation of erythronate-4-phosphate to 3-hydroxy-2-oxo-4-phosphonooxybutanoate. This chain is Erythronate-4-phosphate dehydrogenase, found in Salmonella dublin (strain CT_02021853).